Reading from the N-terminus, the 225-residue chain is Large ribosomal subunit protein bL25 (225 aa).

The disordered stretch occupies residues 197–225 (PQREEQMEDTDTAAADEEGDKEEDADKQE). A compositionally biased stretch (acidic residues) spans 202 to 225 (QMEDTDTAAADEEGDKEEDADKQE).

Belongs to the bacterial ribosomal protein bL25 family. CTC subfamily. As to quaternary structure, part of the 50S ribosomal subunit; part of the 5S rRNA/L5/L18/L25 subcomplex. Contacts the 5S rRNA. Binds to the 5S rRNA independently of L5 and L18.

Its function is as follows. This is one of the proteins that binds to the 5S RNA in the ribosome where it forms part of the central protuberance. This Dichelobacter nodosus (strain VCS1703A) protein is Large ribosomal subunit protein bL25.